Reading from the N-terminus, the 202-residue chain is Protein DCV1 (202 aa).

A signal peptide spans 1–18 (MLNYKLILLFSSFLQLIS). A run of 3 helical transmembrane segments spans residues 91–107 (IGGL…LTFI), 137–155 (ILTL…LLCM), and 168–189 (LVWL…FLSF).

It is found in the membrane. The sequence is that of Protein DCV1 (DCV1) from Saccharomyces cerevisiae (strain ATCC 204508 / S288c) (Baker's yeast).